The chain runs to 514 residues: Protein nucleotidyltransferase YdiU (514 aa).

Gly-111, Gly-113, Arg-114, Lys-134, Asp-146, Gly-147, Arg-197, and Arg-204 together coordinate ATP. Asp-276 serves as the catalytic Proton acceptor. Mg(2+) contacts are provided by Asn-277 and Asp-286. Asp-286 is an ATP binding site.

It belongs to the SELO family. Requires Mg(2+) as cofactor. It depends on Mn(2+) as a cofactor.

It catalyses the reaction L-seryl-[protein] + ATP = 3-O-(5'-adenylyl)-L-seryl-[protein] + diphosphate. The enzyme catalyses L-threonyl-[protein] + ATP = 3-O-(5'-adenylyl)-L-threonyl-[protein] + diphosphate. It carries out the reaction L-tyrosyl-[protein] + ATP = O-(5'-adenylyl)-L-tyrosyl-[protein] + diphosphate. The catalysed reaction is L-histidyl-[protein] + UTP = N(tele)-(5'-uridylyl)-L-histidyl-[protein] + diphosphate. It catalyses the reaction L-seryl-[protein] + UTP = O-(5'-uridylyl)-L-seryl-[protein] + diphosphate. The enzyme catalyses L-tyrosyl-[protein] + UTP = O-(5'-uridylyl)-L-tyrosyl-[protein] + diphosphate. In terms of biological role, nucleotidyltransferase involved in the post-translational modification of proteins. It can catalyze the addition of adenosine monophosphate (AMP) or uridine monophosphate (UMP) to a protein, resulting in modifications known as AMPylation and UMPylation. This chain is Protein nucleotidyltransferase YdiU, found in Rhodococcus jostii (strain RHA1).